The chain runs to 142 residues: Glia maturation factor beta (142 aa).

Ser2 bears the N-acetylserine mark. Residues 4–139 (SLVVCDVAED…TEEWLREKLG (136 aa)) enclose the ADF-H domain.

This sequence belongs to the actin-binding proteins ADF family. GMF subfamily. Phosphorylated; stimulated by phorbol ester.

In terms of biological role, this protein causes differentiation of brain cells, stimulation of neural regeneration, and inhibition of proliferation of tumor cells. This Rattus norvegicus (Rat) protein is Glia maturation factor beta (Gmfb).